The chain runs to 524 residues: Tyrosine-protein kinase HCK (524 aa).

Disordered regions lie at residues Met-1–Pro-20 and Lys-35–Gly-71. The N-myristoyl glycine moiety is linked to residue Gly-2. A lipid anchor (S-palmitoyl cysteine) is attached at Gly-3. Phosphotyrosine; by autocatalysis is present on Tyr-50. Residues Ser-76 to Ser-136 enclose the SH3 domain. An SH2 domain is found at Trp-142 to Cys-239. Position 200 is a phosphothreonine (Thr-200). Tyr-207 carries the post-translational modification Phosphotyrosine. The Protein kinase domain maps to Leu-260–Tyr-513. ATP contacts are provided by residues Leu-266–Val-274 and Lys-288. Residue Asp-379 is the Proton acceptor of the active site. Tyr-409 carries the post-translational modification Phosphotyrosine; by autocatalysis. Position 460 is a phosphoserine (Ser-460). Residue Tyr-520 is modified to Phosphotyrosine.

This sequence belongs to the protein kinase superfamily. Tyr protein kinase family. SRC subfamily. Interacts with ADAM15. Interacts with FASLG. Interacts with ARRB1 and ARRB2. Interacts with FCGR1A; the interaction may be indirect. Interacts with IL6ST. Interacts (via SH3 domain) with ELMO1. Interacts (via SH3 domain) with TP73. Interacts with YAP1. Interacts with ABL1 and ITGB1, and thereby recruits ABL1 to activated ITGB1. Interacts (via SH2 domain) with FLT3 (tyrosine phosphorylated). Interacts with CBL. Interacts with VAV1, WAS and RAPGEF1. Interacts (via SH3 domain) with WDCP. Phosphorylated on several tyrosine residues. Autophosphorylated. Becomes rapidly phosphorylated upon activation of the immunoglobulin receptors FCGR1A and FCGR2A. Phosphorylation at Tyr-409 increases kinase activity. Phosphorylation at Tyr-520 inhibits kinase activity. Kinase activity is not required for phosphorylation at Tyr-520, suggesting that this site may be a target of other kinases. In terms of processing, ubiquitinated by CBL, leading to its degradation via the proteasome. Post-translationally, isoform 2 palmitoylation at position 2 requires prior myristoylation. Palmitoylation at position 3 is required for caveolar localization of isoform 2. Expressed strongly in spleen and at very low levels in thymus.

It is found in the cytoplasmic vesicle. It localises to the secretory vesicle. Its subcellular location is the cytoplasm. The protein resides in the cytosol. The protein localises to the membrane. It is found in the caveola. It localises to the lysosome. Its subcellular location is the cell projection. The protein resides in the podosome membrane. The protein localises to the cell membrane. It is found in the cell junction. It localises to the focal adhesion. Its subcellular location is the cytoskeleton. The protein resides in the golgi apparatus. The protein localises to the nucleus. The catalysed reaction is L-tyrosyl-[protein] + ATP = O-phospho-L-tyrosyl-[protein] + ADP + H(+). Its activity is regulated as follows. Subject to autoinhibition, mediated by intramolecular interactions involving the SH2 and SH3 domains. Kinase activity is also regulated by phosphorylation at regulatory tyrosine residues. Phosphorylation at Tyr-409 is required for optimal activity. Phosphorylation at Tyr-520 inhibits kinase activity. Functionally, non-receptor tyrosine-protein kinase found in hematopoietic cells that transmits signals from cell surface receptors and plays an important role in the regulation of innate immune responses, including neutrophil, monocyte, macrophage and mast cell functions, phagocytosis, cell survival and proliferation, cell adhesion and migration. Acts downstream of receptors that bind the Fc region of immunoglobulins, such as FCGR1A and FCGR2A, but also CSF3R, PLAUR, the receptors for IFNG, IL2, IL6 and IL8, and integrins, such as ITGB1 and ITGB2. During the phagocytic process, mediates mobilization of secretory lysosomes, degranulation, and activation of NADPH oxidase to bring about the respiratory burst. Plays a role in the release of inflammatory molecules. Promotes reorganization of the actin cytoskeleton and actin polymerization, formation of podosomes and cell protrusions. Inhibits TP73-mediated transcription activation and TP73-mediated apoptosis. Phosphorylates CBL in response to activation of immunoglobulin gamma Fc region receptors. Phosphorylates ADAM15, BCR, ELMO1, FCGR2A, GAB1, GAB2, RAPGEF1, STAT5B, TP73, VAV1 and WAS. The protein is Tyrosine-protein kinase HCK (Hck) of Rattus norvegicus (Rat).